The primary structure comprises 168 residues: MNSKGQYPTQPTYPVQPPGNPVYPQTLHLPQAPPYTDAPPAYSELYRPSFVHPGAATVPTMSAAFPGASLYLPMAQSVAVGPLGSTIPMAYYPVGPIYPPGSAVLVEGGYDAGARFGAGATAGNIPPPPPGCPPNAAQLAVMQGANVLVTQRKGNFFMGGSDGGYTIW.

The segment covering 1 to 13 has biased composition (low complexity); it reads MNSKGQYPTQPTY. The segment at 1-25 is disordered; sequence MNSKGQYPTQPTYPVQPPGNPVYPQ. The PPAY signature appears at 39–42; sequence PPAY. At S77 the chain carries Phosphoserine.

As to quaternary structure, interacts with SOX6. Interacts with DAZ1 and DAZL. Interacts with IL17RB. May interact with FAM168B. Interacts with INCA1. Interacts with EIF4G1 and EIF4G2. Interacts (via PPAY motif) with NEDD4 (via WW domains). Interacts with transcription factor TCF4; the interaction results in localization of DAZAP2 to the nucleus. Interacts with transcription factors TCF7 and TCF7L1. Interacts with transcription factor LEF1. Interacts with serine/threonine-protein kinase HIPK2; the interaction results in phosphorylation of DAZAP2 which causes localization of DAZAP2 to the nucleus, reduces interaction of DAZAP2 with HIPK2 and prevents DAZAP2-dependent degradation of HIPK2. Interacts with ubiquitin ligase SIAH1; the interaction is decreased following phosphorylation of DAZAP2 by HIPK2. Interacts with TP53; the interaction is triggered by DNA damage. Ubiquitinated by SMURF2, leading to proteasomal degradation. Ubiquitinated by NEDD4, leading to proteasomal degradation. In terms of processing, following DNA damage, phosphorylated by HIPK2 which promotes DAZAP2 localization to the nucleus, reduces interaction of DAZAP2 with HIPK2 and SIAH1, and prevents DAZAP2-dependent ubiquitination of HIPK2 by E3 ubiquitin-protein ligase SIAH1 and subsequent HIPK2 proteasomal degradation. As to expression, widely expressed. Highly expressed in brain.

It localises to the cytoplasm. It is found in the nucleus. Its subcellular location is the nucleus speckle. The protein resides in the nuclear body. The protein localises to the stress granule. Functionally, in unstressed cells, promotes SIAH1-mediated polyubiquitination and degradation of the serine/threonine-protein kinase HIPK2, probably by acting as a loading factor that potentiates complex formation between HIPK2 and ubiquitin ligase SIAH1. In response to DNA damage, localizes to the nucleus following phosphorylation by HIPK2 and modulates the expression of a subset of TP53/p53 target genes by binding to TP53 at target gene promoters. This limits the expression of a number of cell death-mediating TP53 target genes, reducing DNA damage-induced cell death. Enhances the binding of transcription factor TCF7L2/TCF4, a Wnt signaling pathway effector, to the promoters of target genes. Plays a role in stress granule formation. This is DAZ-associated protein 2 (Dazap2) from Mus musculus (Mouse).